Consider the following 328-residue polypeptide: Telomere-binding protein cav (328 aa).

Positions 107 to 320 (RRKMVQPYPE…NISLQNSGSE (214 aa)) are required for binding to Su(var)205. A disordered region spans residues 139–228 (DRWQKQKSQN…EFQTEHTDCP (90 aa)). 2 stretches are compositionally biased toward polar residues: residues 144–167 (QKSQ…QQDS) and 180–189 (ANTNRYSVSQ). 2 consecutive short sequence motifs (su(var)205-binding Pro-containing repeat) follow at residues 228–232 (PETQM) and 281–287 (PETETNE). The segment covering 295–319 (INSESMSIGPSIDSEGNISLQNSGS) has biased composition (polar residues). Residues 295 to 328 (INSESMSIGPSIDSEGNISLQNSGSEPIDVDSMA) form a disordered region.

As to quaternary structure, interacts (via C-terminus) with Su(var)205 dimer (via hinge and chromoshadow domain) and with moi to form the terminin, telomere-capping, complex. Interacts with HP6, which is also part of the terminin complex.

It localises to the nucleus. It is found in the chromosome. The protein resides in the telomere. Functionally, binds to chromosome ends in a sequence-dependent manner and is required for telomere capping. The polypeptide is Telomere-binding protein cav (Drosophila erecta (Fruit fly)).